Here is a 274-residue protein sequence, read N- to C-terminus: S-methyl-5'-thioadenosine phosphorylase (274 aa).

Residues S20, 62–63 (RH), and 95–96 (SA) contribute to the phosphate site. M194 contributes to the substrate binding site. A phosphate-binding site is contributed by T195. 218-220 (DYD) serves as a coordination point for substrate.

Belongs to the PNP/MTAP phosphorylase family. MTAP subfamily. As to quaternary structure, homohexamer. Dimer of a homotrimer.

It carries out the reaction S-methyl-5'-thioadenosine + phosphate = 5-(methylsulfanyl)-alpha-D-ribose 1-phosphate + adenine. It functions in the pathway amino-acid biosynthesis; L-methionine biosynthesis via salvage pathway; S-methyl-5-thio-alpha-D-ribose 1-phosphate from S-methyl-5'-thioadenosine (phosphorylase route): step 1/1. Catalyzes the reversible phosphorylation of S-methyl-5'-thioadenosine (MTA) to adenine and 5-methylthioribose-1-phosphate. Involved in the breakdown of MTA, a major by-product of polyamine biosynthesis. Responsible for the first step in the methionine salvage pathway after MTA has been generated from S-adenosylmethionine. Has broad substrate specificity with 6-aminopurine nucleosides as preferred substrates. In Hyperthermus butylicus (strain DSM 5456 / JCM 9403 / PLM1-5), this protein is S-methyl-5'-thioadenosine phosphorylase.